The sequence spans 1108 residues: Serine/threonine-protein kinase AKL1 (1108 aa).

Ser2 carries the N-acetylserine modification. Position 10 is a phosphoserine (Ser10). Residues 35 to 319 (VEVVNYLAEG…IYQVLYHLCE (285 aa)) enclose the Protein kinase domain. ATP-binding positions include 41 to 49 (LAEGGFAQI) and Lys70. Asp181 acts as the Proton acceptor in catalysis. Residues 405-466 (IPSQNVGQEL…QSPGIEDKSI (62 aa)) form a disordered region. A Phosphoserine modification is found at Ser407. A compositionally biased stretch (basic and acidic residues) spans 419-435 (ESQSDQRKSTLSEDKSS). The span at 436–449 (RTTSNANSSGTANN) shows a compositional bias: low complexity. At Thr471 the chain carries Phosphothreonine. Residues 493–513 (KQSSDPTISEQSPRLNTQSLP) are compositionally biased toward polar residues. Residues 493 to 534 (KQSSDPTISEQSPRLNTQSLPQRQKSTSSYSSGGRSMKSTSY) are disordered. Ser504 is subject to Phosphoserine. Residues 514–534 (QRQKSTSSYSSGGRSMKSTSY) show a composition bias toward low complexity. 2 positions are modified to phosphoserine: Ser541 and Ser574. The segment covering 590 to 629 (QQQGQRYQQAQNQTGTQGNTFPDESQYQSRVEQQQQQQDQ) has biased composition (low complexity). Disordered regions lie at residues 590–663 (QQQG…GDSG) and 765–791 (EDMR…HSSS). Positions 781–791 (NSANEPMHSSS) are enriched in polar residues. Ser801 bears the Phosphoserine mark. The interval 807–838 (AGKQSFQDTNEPQTGGIEDAGGSGTIKGSNNN) is disordered. Residues 810-819 (QSFQDTNEPQ) are compositionally biased toward polar residues. Position 846 is a phosphoserine (Ser846). Residues 858 to 1108 (GAAVSSFSSS…SFFSVFRSEK (251 aa)) form a disordered region. Low complexity predominate over residues 859–872 (AAVSSFSSSSSSAS). The segment covering 910-934 (DDARRGKTAERRPLHNERGHKDQAR) has biased composition (basic and acidic residues). A compositionally biased stretch (polar residues) spans 935–976 (SSDASKSNQFKSKDFSSVSTRQPRQSLDLNFQEVNLSSPTLT). Phosphoserine is present on residues Ser953 and Ser960. Residues 1006 to 1048 (ENKRHSTGHELSTRSNGKHETHRTGSKQRHDLERYRHSKDKDS) are compositionally biased toward basic and acidic residues. Glycyl lysine isopeptide (Lys-Gly) (interchain with G-Cter in ubiquitin) cross-links involve residues Lys1008 and Lys1046. Ser1048 bears the Phosphoserine mark. The span at 1049–1060 (NSSITISTSTPS) shows a compositional bias: low complexity. The span at 1071–1082 (QSLDLERVRREA) shows a compositional bias: basic and acidic residues. Position 1072 is a phosphoserine (Ser1072).

It belongs to the protein kinase superfamily. Ser/Thr protein kinase family.

It catalyses the reaction L-seryl-[protein] + ATP = O-phospho-L-seryl-[protein] + ADP + H(+). The enzyme catalyses L-threonyl-[protein] + ATP = O-phospho-L-threonyl-[protein] + ADP + H(+). Phosphorylates SCD5. The protein is Serine/threonine-protein kinase AKL1 (AKL1) of Saccharomyces cerevisiae (strain ATCC 204508 / S288c) (Baker's yeast).